A 115-amino-acid polypeptide reads, in one-letter code: Large ribosomal subunit protein uL24 (115 aa).

Belongs to the universal ribosomal protein uL24 family. In terms of assembly, part of the 50S ribosomal subunit.

One of two assembly initiator proteins, it binds directly to the 5'-end of the 23S rRNA, where it nucleates assembly of the 50S subunit. Functionally, one of the proteins that surrounds the polypeptide exit tunnel on the outside of the subunit. This is Large ribosomal subunit protein uL24 from Amoebophilus asiaticus (strain 5a2).